Reading from the N-terminus, the 351-residue chain is LETM1 domain-containing protein 1 (351 aa).

The Cytoplasmic portion of the chain corresponds to 1–130 (MLSGMALCRT…FRRDIIKAAP (130 aa)). A helical transmembrane segment spans residues 131-151 (VVIISIPPFANYLVFVLMYFF). The Mitochondrial intermembrane segment spans residues 152-351 (PRQLLIRHFW…SANYLQSIKQ (200 aa)). The region spanning 172-351 (IYHRMRVEAY…SANYLQSIKQ (180 aa)) is the Letm1 RBD domain.

It is found in the mitochondrion outer membrane. The protein resides in the nucleus. Its subcellular location is the mitochondrion inner membrane. Functionally, may play an essential role for mitochondrial structure and function. The polypeptide is LETM1 domain-containing protein 1 (Xenopus tropicalis (Western clawed frog)).